The sequence spans 239 residues: LexA repressor (239 aa).

Residues 26 to 46 (FDEMKDALDLASKSGIHRLIT) constitute a DNA-binding region (H-T-H motif). Active-site for autocatalytic cleavage activity residues include S159 and K197.

This sequence belongs to the peptidase S24 family. Homodimer.

The enzyme catalyses Hydrolysis of Ala-|-Gly bond in repressor LexA.. In terms of biological role, represses a number of genes involved in the response to DNA damage (SOS response), including recA and lexA. In the presence of single-stranded DNA, RecA interacts with LexA causing an autocatalytic cleavage which disrupts the DNA-binding part of LexA, leading to derepression of the SOS regulon and eventually DNA repair. This Rhizobium etli (strain CIAT 652) protein is LexA repressor.